We begin with the raw amino-acid sequence, 446 residues long: Peroxisomal biogenesis factor 3 (446 aa).

Residues 1–12 are Peroxisomal-facing; it reads MARTGLQRHRGK. A helical membrane pass occupies residues 13 to 33; it reads LLGTGAVLGGLVVAGVVAAVA. Topologically, residues 34–446 are cytoplasmic; the sequence is AKRWVRRQQQ…SASVYSNFGV (413 aa). A disordered region spans residues 101 to 122; that stretch reads RAGEDDEQGSGGHASAGEGSVS.

This sequence belongs to the peroxin-3 family.

The protein localises to the peroxisome membrane. Functionally, involved in peroxisome biosynthesis. The chain is Peroxisomal biogenesis factor 3 (PEX3) from Eremothecium gossypii (strain ATCC 10895 / CBS 109.51 / FGSC 9923 / NRRL Y-1056) (Yeast).